A 286-amino-acid chain; its full sequence is Cytochrome bo(3) ubiquinol oxidase subunit 2 (286 aa).

The signal sequence occupies residues 1–24 (MQFIKYKSYILKFLLVSCIFCING). Cys25 carries N-palmitoyl cysteine lipidation. The S-diacylglycerol cysteine moiety is linked to residue Cys25. Residues 25-44 (CDCTILCPNGLIAQEQRFVL) lie on the Extracellular side of the membrane. The chain crosses the membrane as a helical span at residues 45-67 (FVSFFTMLLIIIPVIFMTIFFVL). At 68-85 (RYRESNFSKTYDPKWSHS) the chain is on the cytoplasmic side. The helical transmembrane segment at 86 to 108 (NIIELLIWGIPIIIIVFLSIFSW) threads the bilayer. The Extracellular portion of the chain corresponds to 109–286 (KSVHDLDPKK…VIANVLKISL (178 aa)).

It belongs to the cytochrome c oxidase subunit 2 family. In terms of assembly, heterooctamer of two A chains, two B chains, two C chains and two D chains.

Its subcellular location is the cell membrane. Cytochrome bo(3) ubiquinol terminal oxidase is the component of the aerobic respiratory chain of E.coli that predominates when cells are grown at high aeration. Has proton pump activity across the membrane in addition to electron transfer, pumping 2 protons/electron. This is Cytochrome bo(3) ubiquinol oxidase subunit 2 (cyoA) from Buchnera aphidicola subsp. Baizongia pistaciae (strain Bp).